A 946-amino-acid polypeptide reads, in one-letter code: MTLVLFATEYDSAHIVANVLSQTPTDHCVFPLLVKHQVSRRVYFCLQTQKCSDSRRVAPVFAVNNETLQLSRYLAARQPIPLSALIASLDEAETQPLYRHLFRTPVLSPEHGGEVREFKHLVYFHHAAVLRHLNQVFLCPTSPSWFISVFGHTEGQVLLTMAYYLFEGQYSTISTVEEYVRSFCTRDLGTIIPTHASMGEFARLLLGSPFRQRVSAFVAYAVARNRRDYTELEQVDTQINAFRERARLPDTVCVHYVYLAYRTALARARLLEYRRVVAYDADAAPEAQCTREPGFLGRRLSTELLDVMQKYFSLDNFLHDYVETHLLRLDESPHSATSPHGLGLAGYGGRIDGTHLAGFFGTSTQLARQLERINTLSESVFSPLERSLSGLLRLCASLRTAQTYTTGTLTRYSQRRYLLPEPALAPLLERPLPVYRVHLPNDQHVFCAVASETWHRSLFPRDLLRHVPDSRFSDEALTETVWLHDDDVASTSPETQFYYTRHEVFNERLPVFNFVADFDLRLRDGVSGLARHTVFELCRGLRRVWMTVWASLFGYTHPDRHPVYFFKSACPPNSVPVDAAGAPFDDDDYLDYRDERDTEEDEDGKENKNNVPDNGVFQKTTSSVDTSPPYCRCKGKLGLRIITPFPACTVAVHPSVLRAVAQVLNHAVCLDAELHTLLDPISHPESSLDTGIYHHGRSVRLPYMYKMDQDDGYFMHRRLLPLFIVPDAYREHPLGFVRAQLDLRNLLHHHPPHDLPALPLSPPPRVILSVRDKICPSTEANFIETRSLNVTRYRRRGLTEVLAYHLYGGDGATAAAISDTDLQRLVVTRVWPPLLEHLTQHYEPHVSEQFTAPHVLLFQPHGACCVAVKRRDGARTRDFRCLNYTHRNPQETVQVFIDLRTEHSYALWASLWSRCFTKKCHSNAKNVHISIKIRPPDAPMPPATAV.

The tract at residues 596–626 (RDTEEDEDGKENKNNVPDNGVFQKTTSSVDT) is disordered. The segment covering 617–626 (FQKTTSSVDT) has biased composition (polar residues). The CHC2-type zinc-finger motif lies at 881 to 920 (CLNYTHRNPQETVQVFIDLRTEHSYALWASLWSRCFTKKC).

It belongs to the herpesviridae DNA primase family. In terms of assembly, associates with the helicase and the primase-associated factor to form the helicase-primase factor. Interacts with host SNAPIN.

The protein localises to the host nucleus. Its function is as follows. Essential component of the helicase/primase complex. Unwinds the DNA at the replication forks and generates single-stranded DNA for both leading and lagging strand synthesis. The primase initiates primer synthesis and thereby produces large amount of short RNA primers on the lagging strand that the polymerase elongates using dNTPs. The chain is DNA primase (UL70) from Homo sapiens (Human).